A 580-amino-acid polypeptide reads, in one-letter code: MLLNSSFISLPSFFKSQELGRTNLLIHRNGSPLLCYATNTNVSQRKSANYQPNIWNYDILQSLKHDYEDARYVDRSRRLQEEVKRMIKDENVNILELIDTVKQLGLSYHFEEEIGEALDRFLSLEKCSGRNNFGRSLHETALRFRLLREYGYDISPDIFEKFKDHNGNFKACLVQDIKGMLSLYDASFLSYEGEQILDEANAFTSIHLKDLSEGRSSILIDQVNHSLELPLYRRVQSLEARWFIDSYENRKDANKVLLEAAKLNFNIVQSTLQQDLKEMSRWWKGMGLAPRLSFGRDRLMECFFWAAGMTPFEPQFSNIRKGLTKVCSLITLIDDIYDVYGTLDELELFTTAVESWDINAIQILPEYMKIFFLALYTTVNDFTYDTIKETGHDILPYLVKVWSDMLKAFLQEAKWCHNKHMPKFDDYLNNAWVSVSGVVLLTHSYFLLNRNITKEGLGYLENCPMLLQTPSIIFRLCNDLATSSAELERGEGANSIICYMNENGVSEEVAYKHIQNLLDQTWKKMNKDRVINSPSSKYFSETIINLARISHCTYQYGDGHGAPDTLAKNRIKALILEPIN.

Residues 1–41 constitute a chloroplast transit peptide; that stretch reads MLLNSSFISLPSFFKSQELGRTNLLIHRNGSPLLCYATNTN. Residues Arg-296, Asp-334, Asp-338, Arg-475, and Asn-478 each coordinate (2E)-geranyl diphosphate. Residues Asp-334 and Asp-338 each contribute to the Mg(2+) site. Positions 334 to 338 match the DDXXD motif motif; it reads DDIYD. Positions 478, 482, and 486 each coordinate Mg(2+).

Belongs to the terpene synthase family. Tpsb subfamily. Mg(2+) is required as a cofactor. The cofactor is Mn(2+). In terms of tissue distribution, expressed in leaves.

The protein resides in the plastid. The protein localises to the chloroplast stroma. It catalyses the reaction (2E)-geranyl diphosphate = tricyclene + diphosphate. The catalysed reaction is (2E)-geranyl diphosphate = (E)-beta-ocimene + diphosphate. Its pathway is secondary metabolite biosynthesis; terpenoid biosynthesis. Its function is as follows. Promotes the emission of terpenes volatile organic compounds (VOC) in response to damage mediated by arthropod herbivores (e.g. Spodoptera exigua), probably to attract natural enemies of the herbivores. This chain is Tricyclene synthase TPS4, chloroplastic (TPS4), found in Medicago truncatula (Barrel medic).